Consider the following 141-residue polypeptide: Putative nickel-responsive regulator (141 aa).

Positions 80, 91, 93, and 99 each coordinate Ni(2+).

The protein belongs to the transcriptional regulatory CopG/NikR family. Ni(2+) is required as a cofactor.

Functionally, transcriptional regulator. The polypeptide is Putative nickel-responsive regulator (Methanococcus aeolicus (strain ATCC BAA-1280 / DSM 17508 / OCM 812 / Nankai-3)).